Consider the following 251-residue polypeptide: Cytochrome c oxidase subunit 2 (251 aa).

Residues 1 to 15 form the signal peptide; the sequence is MLTFLSNLNNMIIMN. Topologically, residues 16–42 are mitochondrial intermembrane; sequence DVPTPYGVYFQDSATPNQEGILELHDN. The chain crosses the membrane as a helical span at residues 43 to 64; that stretch reads IMFYLLVILGLVSWLLFTITRT. Topologically, residues 65-82 are mitochondrial matrix; the sequence is YSKNPIAYKYIKHGQTIE. Residues 83–107 traverse the membrane as a helical segment; the sequence is IIWTIFPAVVLLIIAFPSFILLYLC. Residues 108 to 251 are Mitochondrial intermembrane-facing; sequence DEVISPAMTI…PSFLEWLNEQ (144 aa). Cu cation contacts are provided by His186, Cys221, Glu223, Cys225, His229, and Met232. Glu223 contacts Mg(2+).

It belongs to the cytochrome c oxidase subunit 2 family. In terms of assembly, component of the cytochrome c oxidase (complex IV, CIV), a multisubunit enzyme composed of a catalytic core of 3 subunits and several supernumerary subunits. The complex exists as a monomer or a dimer and forms supercomplexes (SCs) in the inner mitochondrial membrane with ubiquinol-cytochrome c oxidoreductase (cytochrome b-c1 complex, complex III, CIII). The cofactor is Cu cation. The signal sequence of COX2 is processed by IMP1.

It localises to the mitochondrion inner membrane. The catalysed reaction is 4 Fe(II)-[cytochrome c] + O2 + 8 H(+)(in) = 4 Fe(III)-[cytochrome c] + 2 H2O + 4 H(+)(out). In terms of biological role, component of the cytochrome c oxidase, the last enzyme in the mitochondrial electron transport chain which drives oxidative phosphorylation. The respiratory chain contains 3 multisubunit complexes succinate dehydrogenase (complex II, CII), ubiquinol-cytochrome c oxidoreductase (cytochrome b-c1 complex, complex III, CIII) and cytochrome c oxidase (complex IV, CIV), that cooperate to transfer electrons derived from NADH and succinate to molecular oxygen, creating an electrochemical gradient over the inner membrane that drives transmembrane transport and the ATP synthase. Cytochrome c oxidase is the component of the respiratory chain that catalyzes the reduction of oxygen to water. Electrons originating from reduced cytochrome c in the intermembrane space (IMS) are transferred via the dinuclear copper A center (CU(A)) of subunit 2 and heme A of subunit 1 to the active site in subunit 1, a binuclear center (BNC) formed by heme A3 and copper B (CU(B)). The BNC reduces molecular oxygen to 2 water molecules using 4 electrons from cytochrome c in the IMS and 4 protons from the mitochondrial matrix. The polypeptide is Cytochrome c oxidase subunit 2 (COX2) (Lachancea kluyveri (strain ATCC 58438 / CBS 3082 / BCRC 21498 / NBRC 1685 / JCM 7257 / NCYC 543 / NRRL Y-12651) (Yeast)).